Here is a 216-residue protein sequence, read N- to C-terminus: Cytochrome c biogenesis ATP-binding export protein CcmA (216 aa).

The ABC transporter domain maps to 11–216 (VSASKLTCIR…RKIRLDYRFV (206 aa)). 43–50 (GPNGAGKT) provides a ligand contact to ATP.

It belongs to the ABC transporter superfamily. CcmA exporter (TC 3.A.1.107) family. In terms of assembly, the complex is composed of two ATP-binding proteins (CcmA) and two transmembrane proteins (CcmB).

It localises to the cell inner membrane. It carries out the reaction heme b(in) + ATP + H2O = heme b(out) + ADP + phosphate + H(+). Functionally, part of the ABC transporter complex CcmAB involved in the biogenesis of c-type cytochromes; once thought to export heme, this seems not to be the case, but its exact role is uncertain. Responsible for energy coupling to the transport system. This Shewanella sp. (strain MR-4) protein is Cytochrome c biogenesis ATP-binding export protein CcmA.